Here is a 128-residue protein sequence, read N- to C-terminus: Global transcriptional regulator Spx 1 (128 aa).

An intrachain disulfide couples Cys10 to Cys13.

The protein belongs to the ArsC family. Spx subfamily. Interacts with the C-terminal domain of the alpha subunit of the RNAP.

The protein localises to the cytoplasm. In terms of biological role, global transcriptional regulator that plays a key role in stress response and exerts either positive or negative regulation of genes. Acts by interacting with the C-terminal domain of the alpha subunit of the RNA polymerase (RNAP). This interaction can enhance binding of RNAP to the promoter region of target genes and stimulate their transcription, or block interaction of RNAP with activator. The protein is Global transcriptional regulator Spx 1 of Lactococcus lactis subsp. lactis (strain IL1403) (Streptococcus lactis).